The sequence spans 143 residues: Ribonuclease HI (143 aa).

Residues 1–136 (MQEIEIFCDG…CNSLAKLEAQ (136 aa)) enclose the RNase H type-1 domain. Positions 9, 47, 69, and 128 each coordinate Mg(2+).

The protein belongs to the RNase H family. In terms of assembly, monomer. It depends on Mg(2+) as a cofactor.

It localises to the cytoplasm. It carries out the reaction Endonucleolytic cleavage to 5'-phosphomonoester.. Its function is as follows. Endonuclease that specifically degrades the RNA of RNA-DNA hybrids. This Helicobacter pylori (strain J99 / ATCC 700824) (Campylobacter pylori J99) protein is Ribonuclease HI (rnhA).